Here is a 350-residue protein sequence, read N- to C-terminus: Biotin synthase (350 aa).

Residues 38–256 (NYVQVSTLLS…IAVARIMMPE (219 aa)) enclose the Radical SAM core domain. Residues cysteine 53, cysteine 57, and cysteine 60 each coordinate [4Fe-4S] cluster. [2Fe-2S] cluster contacts are provided by cysteine 97, cysteine 128, cysteine 188, and arginine 260.

Belongs to the radical SAM superfamily. Biotin synthase family. In terms of assembly, homodimer. [4Fe-4S] cluster serves as cofactor. It depends on [2Fe-2S] cluster as a cofactor.

It carries out the reaction (4R,5S)-dethiobiotin + (sulfur carrier)-SH + 2 reduced [2Fe-2S]-[ferredoxin] + 2 S-adenosyl-L-methionine = (sulfur carrier)-H + biotin + 2 5'-deoxyadenosine + 2 L-methionine + 2 oxidized [2Fe-2S]-[ferredoxin]. Its pathway is cofactor biosynthesis; biotin biosynthesis; biotin from 7,8-diaminononanoate: step 2/2. Functionally, catalyzes the conversion of dethiobiotin (DTB) to biotin by the insertion of a sulfur atom into dethiobiotin via a radical-based mechanism. This is Biotin synthase from Aliivibrio salmonicida (strain LFI1238) (Vibrio salmonicida (strain LFI1238)).